A 430-amino-acid chain; its full sequence is MSKTHLTEQKFSDFALHPQVIEALESKGFHNCTPIQALALPLALSGRDVAGQAQTGTGKTLAFLASTFHYLLSHPANAERQTNQPRALIMAPTRELAVQIHSDAEALSHLTGLKLGLAYGGDGYDKQLKVLENGVDILIGTTGRLIDYAKQNHINLGAIQVVVLDEADRMYDLGFIKDIRWLFRRMPPAAQRLNMLFSATLSYRVRELAFEQMNNAEYVEVEPEQKTGHRIKEELFYPSNEEKMRLLQTLLEEEWPDRCIIFANTKHRCEDIWGHLAADGHRVGLLTGDVAQKKRLRILEEFTQGNLDILVATDVAARGLHIPSVTHVFNYDLPDDCEDYVHRIGRTGRAGQSGFSISLACEEYALNLPAIETYIGHSIPVSKYNSDALMNDLPAPKRLTRPPRSNNGPRRHNNAPRRSGAPRNNRKRAD.

Positions 9-37 (QKFSDFALHPQVIEALESKGFHNCTPIQA) match the Q motif motif. In terms of domain architecture, Helicase ATP-binding spans 40–219 (LPLALSGRDV…FEQMNNAEYV (180 aa)). Residue 53–60 (AQTGTGKT) coordinates ATP. The DEAD box motif lies at 165 to 168 (DEAD). A Helicase C-terminal domain is found at 245 to 390 (RLLQTLLEEE…VSKYNSDALM (146 aa)). The tract at residues 392–430 (DLPAPKRLTRPPRSNNGPRRHNNAPRRSGAPRNNRKRAD) is disordered.

The protein belongs to the DEAD box helicase family. RhlB subfamily. Component of the RNA degradosome, which is a multiprotein complex involved in RNA processing and mRNA degradation.

It is found in the cytoplasm. It catalyses the reaction ATP + H2O = ADP + phosphate + H(+). Its function is as follows. DEAD-box RNA helicase involved in RNA degradation. Has RNA-dependent ATPase activity and unwinds double-stranded RNA. This is ATP-dependent RNA helicase RhlB from Pectobacterium carotovorum subsp. carotovorum (strain PC1).